Consider the following 377-residue polypeptide: 3-dehydroquinate synthase (377 aa).

NAD(+)-binding positions include 113 to 117, 137 to 138, K150, and K159; these read GVIGD and TT. Positions 192, 254, and 273 each coordinate Zn(2+).

The protein belongs to the sugar phosphate cyclases superfamily. Dehydroquinate synthase family. Co(2+) serves as cofactor. Requires Zn(2+) as cofactor. NAD(+) is required as a cofactor.

Its subcellular location is the cytoplasm. It catalyses the reaction 7-phospho-2-dehydro-3-deoxy-D-arabino-heptonate = 3-dehydroquinate + phosphate. Its pathway is metabolic intermediate biosynthesis; chorismate biosynthesis; chorismate from D-erythrose 4-phosphate and phosphoenolpyruvate: step 2/7. Functionally, catalyzes the conversion of 3-deoxy-D-arabino-heptulosonate 7-phosphate (DAHP) to dehydroquinate (DHQ). This is 3-dehydroquinate synthase from Bartonella tribocorum (strain CIP 105476 / IBS 506).